The chain runs to 249 residues: 5'-nucleotidase SurE (249 aa).

The a divalent metal cation site is built by aspartate 9, aspartate 10, serine 40, and asparagine 92.

Belongs to the SurE nucleotidase family. A divalent metal cation serves as cofactor.

It is found in the cytoplasm. The catalysed reaction is a ribonucleoside 5'-phosphate + H2O = a ribonucleoside + phosphate. Functionally, nucleotidase that shows phosphatase activity on nucleoside 5'-monophosphates. The chain is 5'-nucleotidase SurE from Shewanella sp. (strain ANA-3).